The chain runs to 344 residues: Type VI secretion system component TssA1 (344 aa).

In terms of assembly, homododecamer. Interacts with TssB1 and TssC1. Interacts with TssK1 and TssF1.

Its function is as follows. Core component of the H1 type VI (H1-T6SS) secretion system that plays a role in the release of toxins targeting both eukaryotic and prokaryotic species. Forms a dodecameric ring-shaped structure located at one end of the T6SS sheath. May properly attach the pre-assembled sheath onto the baseplate and/or stabilize the sheaths tubular structure. In Pseudomonas aeruginosa (strain ATCC 15692 / DSM 22644 / CIP 104116 / JCM 14847 / LMG 12228 / 1C / PRS 101 / PAO1), this protein is Type VI secretion system component TssA1.